Consider the following 361-residue polypeptide: Mitochondrial fission regulator 2 (361 aa).

A Phosphoserine modification is found at serine 137. 2 disordered regions span residues 191–286 and 298–322; these read FIDL…VPNM and LRPV…EWDP. Residues 219 to 231 are compositionally biased toward pro residues; sequence VLPPPPPPPPPPQ. Low complexity predominate over residues 232–244; it reads FSLQPPSSLPMQP. The span at 250–282 shows a compositional bias: basic and acidic residues; the sequence is HDIDSLATEMERQLSGVKKTDDSHHSKSQRLRD. Residues serine 304 and serine 340 each carry the phosphoserine modification.

The protein belongs to the MTFR1 family. Expressed predominantly in testis (at protein level). Expressed to a lower extent in spleen.

The protein resides in the mitochondrion. Its function is as follows. May play a role in mitochondrial aerobic respiration essentially in the testis. Can also promote mitochondrial fission. This chain is Mitochondrial fission regulator 2 (Mtfr2), found in Mus musculus (Mouse).